Reading from the N-terminus, the 1235-residue chain is Phosphorylase b kinase regulatory subunit alpha, liver isoform (1235 aa).

The interval 636 to 655 (FSPDSEPDLGGYLEDSSPQE) is disordered. Phosphoserine is present on residues Ser695, Ser729, and Ser735. The interval 807–837 (LSELYGKAGLNQEWSLIRYISGLLRKKVEVL) is calmodulin-binding. 3 positions are modified to phosphoserine: Ser983, Ser1015, and Ser1044. The tract at residues 1033–1060 (SIKSVRSSTPSSPTGTSSTDSGGQHLGW) is disordered. The span at 1039 to 1055 (SSTPSSPTGTSSTDSGG) shows a compositional bias: low complexity. Positions 1059-1099 (GWGEQQGQWLRRRRLDGAINRVPVGFYQKVWKILQKCHGLS) are calmodulin-binding. Residue Cys1232 is the site of S-farnesyl cysteine attachment.

The protein belongs to the phosphorylase b kinase regulatory chain family. Hexadecamer of 4 heterotetramers, each composed of alpha, beta, gamma, and delta subunits. Alpha (PHKA1 or PHKA2) and beta (PHKB) are regulatory subunits, gamma (PHKG1 or PHKG2) is the catalytic subunit, and delta is calmodulin. Although the final Cys may be farnesylated, the terminal tripeptide is probably not removed, and the C-terminus is not methylated.

The protein resides in the cell membrane. The protein operates within glycan biosynthesis; glycogen metabolism. By phosphorylation of various serine residues and by calcium. Phosphorylase b kinase catalyzes the phosphorylation of serine in certain substrates, including troponin I. The alpha chain may bind calmodulin. The sequence is that of Phosphorylase b kinase regulatory subunit alpha, liver isoform (Phka2) from Mus musculus (Mouse).